We begin with the raw amino-acid sequence, 80 residues long: Clavanin-C (80 aa).

An N-terminal signal peptide occupies residues 1–19; that stretch reads MKTTILILLILGLGINAKS. A propeptide spanning residues 20 to 29 is cleaved from the precursor; sequence LEERKSEEEK. A Phenylalanine amide modification is found at phenylalanine 52. Positions 54 to 80 are excised as a propeptide; sequence DDQQDNGKFYGHYAEDNGKHWYDTGDQ.

In terms of tissue distribution, hemocytes and pharyngeal tissues.

It is found in the secreted. Has antimicrobial activity against E.coli, L.monocytogenes and C.albicans. The sequence is that of Clavanin-C from Styela clava (Sea squirt).